A 127-amino-acid polypeptide reads, in one-letter code: MTFEMLYSKIHRATVSDANLNYVGSITIDEDLMKAANLRVGQKVDIVNINNGERFQTYIIKGKAGSKDMCLNGAAARKVEIGDKIIVIAYATFSEAELENYKPTVVLVDDKNNIELITHELEGGKYV.

Ser25 (schiff-base intermediate with substrate; via pyruvic acid) is an active-site residue. Ser25 carries the pyruvic acid (Ser) modification. Thr57 provides a ligand contact to substrate. The active-site Proton donor is Tyr58. 73-75 (GAA) contributes to the substrate binding site.

Belongs to the PanD family. Heterooctamer of four alpha and four beta subunits. Pyruvate serves as cofactor. In terms of processing, is synthesized initially as an inactive proenzyme, which is activated by self-cleavage at a specific serine bond to produce a beta-subunit with a hydroxyl group at its C-terminus and an alpha-subunit with a pyruvoyl group at its N-terminus.

The protein localises to the cytoplasm. It carries out the reaction L-aspartate + H(+) = beta-alanine + CO2. Its pathway is cofactor biosynthesis; (R)-pantothenate biosynthesis; beta-alanine from L-aspartate: step 1/1. Functionally, catalyzes the pyruvoyl-dependent decarboxylation of aspartate to produce beta-alanine. This Aliarcobacter butzleri (strain RM4018) (Arcobacter butzleri) protein is Aspartate 1-decarboxylase.